Reading from the N-terminus, the 314-residue chain is Putative methylthioribose-1-phosphate isomerase (314 aa).

Residues 45 to 47 (RGA), Arg79, and Gln177 each bind substrate. Asp218 functions as the Proton donor in the catalytic mechanism. 227–228 (NK) lines the substrate pocket.

The protein belongs to the eIF-2B alpha/beta/delta subunits family. MtnA subfamily.

It catalyses the reaction 5-(methylsulfanyl)-alpha-D-ribose 1-phosphate = 5-(methylsulfanyl)-D-ribulose 1-phosphate. In terms of biological role, catalyzes the interconversion of methylthioribose-1-phosphate (MTR-1-P) into methylthioribulose-1-phosphate (MTRu-1-P). The protein is Putative methylthioribose-1-phosphate isomerase of Methanosphaera stadtmanae (strain ATCC 43021 / DSM 3091 / JCM 11832 / MCB-3).